The primary structure comprises 76 residues: uncharacterized protein (76 aa).

A helical transmembrane segment spans residues 20-42; that stretch reads GIVWGPKLAPWGITLGLGAFYFF.

It is found in the membrane. This is an uncharacterized protein from Dictyostelium discoideum (Social amoeba).